Consider the following 113-residue polypeptide: PTS system fructose-like EIIB component 3 (113 aa).

Residues 1–100 form the PTS EIIB type-2 domain; it reads MAYLVAVTAC…PQRVMSAVRK (100 aa). The Phosphocysteine intermediate role is filled by Cys10. A Phosphocysteine; by EIIA modification is found at Cys10.

The protein resides in the cytoplasm. The enzyme catalyses D-fructose(out) + N(pros)-phospho-L-histidyl-[protein] = D-fructose 1-phosphate(in) + L-histidyl-[protein]. The phosphoenolpyruvate-dependent sugar phosphotransferase system (sugar PTS), a major carbohydrate active transport system, catalyzes the phosphorylation of incoming sugar substrates concomitantly with their translocation across the cell membrane. The polypeptide is PTS system fructose-like EIIB component 3 (frwD) (Escherichia coli (strain K12)).